The primary structure comprises 259 residues: Global transcriptional regulator CodY (259 aa).

The interval 1-155 is GAF domain; it reads MNLLQKTRKI…GATVVGMEIL (155 aa). The segment at residues 203–222 is a DNA-binding region (H-T-H motif); it reads ASKIADRVGITRSVIVNALR. S215 is modified (phosphoserine).

This sequence belongs to the CodY family.

The protein resides in the cytoplasm. In terms of biological role, DNA-binding global transcriptional regulator which is involved in the adaptive response to starvation and acts by directly or indirectly controlling the expression of numerous genes in response to nutrient availability. During rapid exponential growth, CodY is highly active and represses genes whose products allow adaptation to nutrient depletion. The polypeptide is Global transcriptional regulator CodY (Geobacillus sp. (strain WCH70)).